Here is a 198-residue protein sequence, read N- to C-terminus: dCTP deaminase (198 aa).

Residues 110–115, Asp-128, 136–138, Tyr-171, Lys-178, and Gln-182 each bind dCTP; these read RSSLAR and VLE. Glu-138 serves as the catalytic Proton donor/acceptor. The interval 168 to 198 is disordered; it reads ARPYNKREDAKYRDQKGAVASRISQDEKVNK. Over residues 172 to 183 the composition is skewed to basic and acidic residues; the sequence is NKREDAKYRDQK.

The protein belongs to the dCTP deaminase family. As to quaternary structure, homotrimer.

It catalyses the reaction dCTP + H2O + H(+) = dUTP + NH4(+). The protein operates within pyrimidine metabolism; dUMP biosynthesis; dUMP from dCTP (dUTP route): step 1/2. Its function is as follows. Catalyzes the deamination of dCTP to dUTP. This Colwellia psychrerythraea (strain 34H / ATCC BAA-681) (Vibrio psychroerythus) protein is dCTP deaminase.